The chain runs to 37 residues: MKVKPSVKTVCEKCKVIRRKGKVVIICSNAKHKQRQG.

This sequence belongs to the bacterial ribosomal protein bL36 family.

In Desulforudis audaxviator (strain MP104C), this protein is Large ribosomal subunit protein bL36.